The primary structure comprises 309 residues: MEEEYESRRLRRWEELDTDILVRIFQKFSVFELTSGLAHVCRGWRAACCDPILWKTVDLSNMRSSFIKIPLEPYVYVERRSDEALTRILKLSMNLSGGSTRTLIFHFNLFLSDDQLTYTAERCPGLRRVVLPAWNRIKKTGICKAIRIWKDLESLTMPSIANPPYLLTEIAKNCKNFKELKIMGPFEVFFANTLITCLPNIKTLSIRCSAIKREALMKILDGLPSLEVLNISHSHLVEYSGWQPQQKVIVRELDKTIMEKTARLKKFLTCMDHKTCVMCQRTENDEGIVRWYKYEEGDWKVDEVSSLHL.

The F-box domain maps to 10 to 57; sequence LRRWEELDTDILVRIFQKFSVFELTSGLAHVCRGWRAACCDPILWKTV. LRR repeat units lie at residues 77 to 107, 108 to 133, 159 to 184, and 208 to 233; these read VERR…IFHF, NLFL…VLPA, SIAN…KIMG, and CSAI…NISH.

In Arabidopsis thaliana (Mouse-ear cress), this protein is F-box/LRR-repeat protein At3g48880.